We begin with the raw amino-acid sequence, 51 residues long: Conotoxin Cal6.33 (51 aa).

Residues 1–22 form the signal peptide; it reads MKLTCVVIIAVLILTACQFTTA. 3 disulfides stabilise this stretch: Cys-25-Cys-39, Cys-32-Cys-43, and Cys-38-Cys-50.

The protein belongs to the conotoxin O1 superfamily. In terms of tissue distribution, expressed by the venom duct.

The protein localises to the secreted. In terms of biological role, probable neurotoxin. The sequence is that of Conotoxin Cal6.33 from Californiconus californicus (California cone).